A 416-amino-acid polypeptide reads, in one-letter code: Dihydrolipoyllysine-residue succinyltransferase component of 2-oxoglutarate dehydrogenase complex (416 aa).

Residues 3-78 (IVDVKVPQLS…VADEIIAKID (76 aa)) enclose the Lipoyl-binding domain. Position 44 is an N6-lipoyllysine (K44). Residues 115–152 (VAMPSAAKLMAEAGLSAGQVAGTGKDGRITKGDALAAA) enclose the Peripheral subunit-binding (PSBD) domain. Catalysis depends on residues H387 and D391.

The protein belongs to the 2-oxoacid dehydrogenase family. In terms of assembly, forms a 24-polypeptide structural core with octahedral symmetry. Part of the 2-oxoglutarate dehydrogenase (OGDH) complex composed of E1 (2-oxoglutarate dehydrogenase), E2 (dihydrolipoamide succinyltransferase) and E3 (dihydrolipoamide dehydrogenase); the complex contains multiple copies of the three enzymatic components (E1, E2 and E3). It depends on (R)-lipoate as a cofactor.

It carries out the reaction N(6)-[(R)-dihydrolipoyl]-L-lysyl-[protein] + succinyl-CoA = N(6)-[(R)-S(8)-succinyldihydrolipoyl]-L-lysyl-[protein] + CoA. Its pathway is amino-acid degradation; L-lysine degradation via saccharopine pathway; glutaryl-CoA from L-lysine: step 6/6. E2 component of the 2-oxoglutarate dehydrogenase (OGDH) complex which catalyzes the second step in the conversion of 2-oxoglutarate to succinyl-CoA and CO(2). In Cupriavidus necator (strain ATCC 17699 / DSM 428 / KCTC 22496 / NCIMB 10442 / H16 / Stanier 337) (Ralstonia eutropha), this protein is Dihydrolipoyllysine-residue succinyltransferase component of 2-oxoglutarate dehydrogenase complex (sucB).